Consider the following 214-residue polypeptide: Large ribosomal subunit protein bL25 (214 aa).

Belongs to the bacterial ribosomal protein bL25 family. CTC subfamily. As to quaternary structure, part of the 50S ribosomal subunit; part of the 5S rRNA/L5/L18/L25 subcomplex. Contacts the 5S rRNA. Binds to the 5S rRNA independently of L5 and L18.

Its function is as follows. This is one of the proteins that binds to the 5S RNA in the ribosome where it forms part of the central protuberance. The chain is Large ribosomal subunit protein bL25 from Polynucleobacter necessarius subsp. necessarius (strain STIR1).